A 299-amino-acid polypeptide reads, in one-letter code: Formylglycine-generating enzyme (299 aa).

Residues Cys-263 and Cys-268 each contribute to the Cu cation site.

It belongs to the sulfatase-modifying factor family. Cu cation is required as a cofactor.

It catalyses the reaction L-cysteinyl-[sulfatase] + 2 a thiol + O2 = an organic disulfide + 3-oxo-L-alanyl-[sulfatase] + hydrogen sulfide + H2O + H(+). It functions in the pathway protein modification; sulfatase oxidation. In terms of biological role, oxidase that catalyzes the conversion of cysteine to 3-oxoalanine on target proteins. 3-oxoalanine modification, which is also named formylglycine (fGly), occurs in the maturation of arylsulfatases and some alkaline phosphatases that use the hydrated form of 3-oxoalanine as a catalytic nucleophile. This is Formylglycine-generating enzyme from Mycobacterium tuberculosis (strain ATCC 25618 / H37Rv).